The sequence spans 520 residues: Membrane-bound glycerophospholipid O-acyltransferase 2 (520 aa).

6 consecutive transmembrane segments (helical) span residues 22–42, 61–81, 88–108, 184–204, 237–257, and 264–284; these read PIDQ…AIWF, TLLG…HFLV, CIMI…FALG, FMGI…FIEG, LLVC…LPVE, and FQAT…LLAA. Catalysis depends on residues asparagine 342 and histidine 373. The next 3 membrane-spanning stretches (helical) occupy residues 366-386, 416-436, and 444-464; these read FILS…FLTG, VITW…FVLL, and FYSS…LLLP.

This sequence belongs to the membrane-bound acyltransferase family. Expressed in neutrophils.

It localises to the endoplasmic reticulum membrane. It catalyses the reaction a 1-acyl-sn-glycero-3-phosphocholine + an acyl-CoA = a 1,2-diacyl-sn-glycero-3-phosphocholine + CoA. It carries out the reaction a 1-acyl-sn-glycero-3-phosphoethanolamine + an acyl-CoA = a 1,2-diacyl-sn-glycero-3-phosphoethanolamine + CoA. The enzyme catalyses a 1-acyl-sn-glycero-3-phosphate + an acyl-CoA = a 1,2-diacyl-sn-glycero-3-phosphate + CoA. The catalysed reaction is (9Z)-hexadecenoyl-CoA + 1-hexadecanoyl-sn-glycero-3-phosphocholine = 1-hexadecanoyl-2-(9Z-hexadecenoyl)-sn-glycero-3-phosphocholine + CoA. It catalyses the reaction 1-hexadecanoyl-sn-glycero-3-phosphoethanolamine + (9Z)-octadecenoyl-CoA = 1-hexadecanoyl-2-(9Z-octadecenoyl)-sn-glycero-3-phosphoethanolamine + CoA. It carries out the reaction 1-hexadecanoyl-sn-glycero-3-phosphoethanolamine + (9Z)-hexadecenoyl-CoA = 1-hexadecanoyl-2-(9Z)-hexadecenoyl-sn-glycero-3-phosphoethanolamine + CoA. The enzyme catalyses 1-(9Z-octadecenoyl)-sn-glycero-3-phospho-L-serine + hexadecanoyl-CoA = 1-(9Z)-octadecenoyl-2-hexadecanoyl-sn-glycero-3-phosphoserine + CoA. The catalysed reaction is (9Z,12Z)-octadecadienoyl-CoA + 1-hexadecanoyl-sn-glycero-3-phosphocholine = 1-hexadecanoyl-2-(9Z,12Z-octadecadienoyl)-sn-glycero-3-phosphocholine + CoA. It catalyses the reaction 1-hexadecanoyl-sn-glycero-3-phosphocholine + (9Z)-octadecenoyl-CoA = 1-hexadecanoyl-2-(9Z-octadecenoyl)-sn-glycero-3-phosphocholine + CoA. It carries out the reaction 1-hexadecanoyl-sn-glycero-3-phosphate + (9Z)-hexadecenoyl-CoA = 1-hexadecanoyl-2-[(9Z)-hexadec-9-enoyl]-sn-glycero-3-phosphate + CoA. The enzyme catalyses 1-hexadecanoyl-sn-glycero-3-phosphate + (9Z)-octadecenoyl-CoA = 1-hexadecanoyl-2-(9Z-octadecenoyl)-sn-glycero-3-phosphate + CoA. The catalysed reaction is a 1-O-(1Z-alkenyl)-sn-glycero-3-phosphocholine + (9Z)-octadecenoyl-CoA = 1-O-(1Z)-alkenyl-2-(9Z)-octadecenoyl-sn-glycero-3-phosphocholine + CoA. It catalyses the reaction a 1-O-(1Z-alkenyl)-sn-glycero-3-phosphoethanolamine + (9Z)-octadecenoyl-CoA = 1-O-(1Z)-alkenyl-2-(9Z)-octadecenoyl-sn-glycero-3-phosphoethanolamine + CoA. It carries out the reaction 1-octadecanoyl-sn-glycero-3-phosphoethanolamine + (9Z)-octadecenoyl-CoA = 1-octadecanoyl-2-(9Z-octadecenoyl)-sn-glycero-3-phosphoethanolamine + CoA. The enzyme catalyses 1-octadecanoyl-sn-glycero-3-phosphocholine + (9Z)-octadecenoyl-CoA = 1-octadecanoyl-2-(9Z-octadecenoyl)-sn-glycero-3-phosphocholine + CoA. The catalysed reaction is 1-(9Z-octadecenoyl)-sn-glycero-3-phosphoethanolamine + (9Z)-octadecenoyl-CoA = 1,2-di-(9Z-octadecenoyl)-sn-glycero-3-phosphoethanolamine + CoA. Its pathway is lipid metabolism; phospholipid metabolism. Its activity is regulated as follows. Partially inhibited by thimerosal. Its function is as follows. Acyltransferase which catalyzes the transfer of an acyl group from an acyl-CoA to a lysophospholipid leading to the production of a phospholipid and participates in the reacylation step of the phospholipid remodeling pathway also known as the Lands cycle. Catalyzes preferentially the acylation of lysophosphatidylethanolamine (1-acyl-sn-glycero-3-phosphoethanolamine or LPE) and lysophosphatidic acid (LPA) and to a lesser extend lysophosphatidylcholine (LPC) and lysophosphatidylserine (LPS). Prefers oleoyl-CoA as the acyl donor. May be involved in chondrocyte differentiation. The protein is Membrane-bound glycerophospholipid O-acyltransferase 2 of Homo sapiens (Human).